A 265-amino-acid polypeptide reads, in one-letter code: Speedy protein E13 (265 aa).

Positions 1 to 80 are disordered; that stretch reads MGQILGKIMM…EPEKELAPEP (80 aa). Over residues 66–80 the composition is skewed to acidic residues; it reads DESDDEPEKELAPEP.

Belongs to the Speedy/Ringo family.

In Homo sapiens (Human), this protein is Speedy protein E13.